Consider the following 352-residue polypeptide: Phenylalanine--tRNA ligase alpha subunit (352 aa).

Glu-258 is a Mg(2+) binding site.

This sequence belongs to the class-II aminoacyl-tRNA synthetase family. Phe-tRNA synthetase alpha subunit type 1 subfamily. In terms of assembly, tetramer of two alpha and two beta subunits. The cofactor is Mg(2+).

It localises to the cytoplasm. The catalysed reaction is tRNA(Phe) + L-phenylalanine + ATP = L-phenylalanyl-tRNA(Phe) + AMP + diphosphate + H(+). The chain is Phenylalanine--tRNA ligase alpha subunit from Staphylococcus epidermidis (strain ATCC 35984 / DSM 28319 / BCRC 17069 / CCUG 31568 / BM 3577 / RP62A).